We begin with the raw amino-acid sequence, 917 residues long: Autophagy-related protein 9 (917 aa).

Over 1 to 226 the chain is Cytoplasmic; that stretch reads MASNIFSRLV…AGFWCIIVQR (226 aa). Disordered stretches follow at residues 16 to 37 and 119 to 177; these read RSFY…RAGI and LLLS…QGRP. The chain crosses the membrane as a helical span at residues 227–247; the sequence is ILELVNAAFVAVFLTFLSQCV. The Lumenal portion of the chain corresponds to 248–275; the sequence is DYHKLPHSKKMEDIIIPKCTQNMSLVWN. Asn-269 carries an N-linked (GlcNAc...) asparagine glycan. Residues 276 to 296 form a helical membrane-spanning segment; sequence VGLWLFAIYFICRCFGLIIQL. Over 297-442 the chain is Cytoplasmic; that stretch reads RQLKHLRDFY…RQLSQKLKSR (146 aa). Residues 443-463 lie within the membrane without spanning it; it reads FFFAGLMIFVMSPFIALYLIL. Over 464–539 the chain is Cytoplasmic; it reads VYFLTYFHEF…ARTVSFITGS (76 aa). A helical transmembrane segment spans residues 540 to 560; sequence IVAVLGLATIFDSEAFLTFEI. Residues 561-564 are Lumenal-facing; sequence TPDR. A helical transmembrane segment spans residues 565–585; the sequence is SVLFYVSILATLWAVARGNIS. The Cytoplasmic portion of the chain corresponds to 586–633; that stretch reads DDNEVYDPEFAMKSIIEFTHYEPDHWRGRLHSTEVKNEFSELYKPRPQ. Lys-621 is modified (N6-acetyllysine). An intramembrane segment occupies 634–654; it reads IFLEEILSILLTPLVLLVSLP. Topologically, residues 655–917 are cytoplasmic; sequence NSTDQIVDFF…FQQAHMHLRR (263 aa). The segment at 854–895 is disordered; the sequence is DARFGKLGDEDIDESGGALDESTWQTSPTKTLSRENSGANPQ. Residues 875-895 are compositionally biased toward polar residues; sequence STWQTSPTKTLSRENSGANPQ.

This sequence belongs to the ATG9 family. As to quaternary structure, homotrimer; forms a homotrimer with a central pore that forms a path between the two membrane leaflets. Interacts with HAT1. Acetylated by HAT1 at Lys-621, which increases the ability to bind vesicles during nutrient starvation induction. In terms of processing, phosphorylated by ATG1. ATG1 phosphorylation is required for preautophagosome elongation.

It localises to the preautophagosomal structure membrane. The protein localises to the cytoplasmic vesicle membrane. The protein resides in the vacuole membrane. Its subcellular location is the golgi apparatus membrane. It is found in the endoplasmic reticulum membrane. It catalyses the reaction a 1,2-diacyl-sn-glycero-3-phosphocholine(in) = a 1,2-diacyl-sn-glycero-3-phosphocholine(out). The enzyme catalyses a 1,2-diacyl-sn-glycero-3-phospho-L-serine(in) = a 1,2-diacyl-sn-glycero-3-phospho-L-serine(out). The catalysed reaction is a 1,2-diacyl-sn-glycero-3-phosphoethanolamine(in) = a 1,2-diacyl-sn-glycero-3-phosphoethanolamine(out). It carries out the reaction a 1,2-diacyl-sn-glycero-3-phospho-(1D-myo-inositol-3-phosphate)(in) = a 1,2-diacyl-sn-glycero-3-phospho-(1D-myo-inositol-3-phosphate)(out). Its function is as follows. Phospholipid scramblase involved in autophagy and cytoplasm to vacuole transport (Cvt) vesicle formation. Cycles between the preautophagosomal structure/phagophore assembly site (PAS) and the cytoplasmic vesicle pool and supplies membrane for the growing autophagosome. Lipid scramblase activity plays a key role in preautophagosomal structure/phagophore assembly by distributing the phospholipids that arrive through ATG2 from the cytoplasmic to the luminal leaflet of the bilayer, thereby driving autophagosomal membrane expansion. Required for mitophagy. Also involved in endoplasmic reticulum-specific autophagic process and is essential for the survival of cells subjected to severe ER stress. Different machineries are required for anterograde trafficking to the PAS during either the Cvt pathway or bulk autophagy and for retrograde trafficking. Plays a role in appressorium formation and pathogenicity. In Pyricularia oryzae (strain 70-15 / ATCC MYA-4617 / FGSC 8958) (Rice blast fungus), this protein is Autophagy-related protein 9.